A 78-amino-acid chain; its full sequence is Translational regulator CsrA (78 aa).

It belongs to the CsrA/RsmA family. In terms of assembly, homodimer; the beta-strands of each monomer intercalate to form a hydrophobic core, while the alpha-helices form wings that extend away from the core.

The protein resides in the cytoplasm. A translational regulator that binds mRNA to regulate translation initiation and/or mRNA stability. Usually binds in the 5'-UTR at or near the Shine-Dalgarno sequence preventing ribosome-binding, thus repressing translation. Its main target seems to be the major flagellin gene, while its function is anatagonized by FliW. This is Translational regulator CsrA from Desulfovibrio desulfuricans (strain ATCC 27774 / DSM 6949 / MB).